Here is a 343-residue protein sequence, read N- to C-terminus: Fe-S cluster assembly protein DRE2 (343 aa).

The interval 1-188 is N-terminal SAM-like domain; that stretch reads MTVSRDSLVL…KKLTKKVSAI (188 aa). The tract at residues 189-240 is linker; the sequence is KLTDSDLEDDDDDLESDDSANNSKTKFFDDFDDPETGDSIDEDDLIAETEED. 2 stretches are compositionally biased toward acidic residues: residues 195-206 and 218-228; these read LEDDDDDLESDD and DFDDPETGDSI. Residues 195 to 228 are disordered; it reads LEDDDDDLESDDSANNSKTKFFDDFDDPETGDSI. [2Fe-2S] cluster-binding residues include cysteine 247, cysteine 258, cysteine 261, and cysteine 263. The interval 247–263 is fe-S binding site A; it reads CGKSKQRRRKACKDCSC. [4Fe-4S] cluster contacts are provided by cysteine 306, cysteine 309, cysteine 317, and cysteine 320. 2 short sequence motifs (cx2C motif) span residues 306 to 309 and 317 to 320; these read CGSC and CSGC. The tract at residues 306–320 is fe-S binding site B; the sequence is CGSCALGDAFRCSGC.

Belongs to the anamorsin family. As to quaternary structure, monomer. Interacts with TAH18. Interacts with MIA40. The cofactor is [2Fe-2S] cluster. It depends on [4Fe-4S] cluster as a cofactor.

The protein localises to the cytoplasm. The protein resides in the mitochondrion intermembrane space. Component of the cytosolic iron-sulfur (Fe-S) protein assembly (CIA) machinery required for the maturation of extramitochondrial Fe-S proteins. Part of an electron transfer chain functioning in an early step of cytosolic Fe-S biogenesis, facilitating the de novo assembly of a [4Fe-4S] cluster on the scaffold complex CFD1-NBP35. Electrons are transferred to DRE2 from NADPH via the FAD- and FMN-containing protein TAH18. TAH18-DRE2 are also required for the assembly of the diferric tyrosyl radical cofactor of ribonucleotide reductase (RNR), probably by providing electrons for reduction during radical cofactor maturation in the catalytic small subunit RNR2. In Kluyveromyces lactis (strain ATCC 8585 / CBS 2359 / DSM 70799 / NBRC 1267 / NRRL Y-1140 / WM37) (Yeast), this protein is Fe-S cluster assembly protein DRE2.